The sequence spans 776 residues: 3-isopropylmalate dehydratase (776 aa).

Residues Cys357, Cys418, and Cys421 each coordinate [4Fe-4S] cluster. The segment covering 482–493 (SAPKVEVRHDTD) has biased composition (basic and acidic residues). Disordered stretches follow at residues 482 to 518 (SAPKVEVRHDTDSSTLEEANYGHAKEEPPSAELSDVA) and 525 to 544 (DIPVSNSSTQSPGSAPSADA). The span at 527 to 538 (PVSNSSTQSPGS) shows a compositional bias: polar residues.

It belongs to the aconitase/IPM isomerase family. In terms of assembly, monomer. The cofactor is [4Fe-4S] cluster.

The catalysed reaction is (2R,3S)-3-isopropylmalate = (2S)-2-isopropylmalate. Its pathway is amino-acid biosynthesis; L-leucine biosynthesis; L-leucine from 3-methyl-2-oxobutanoate: step 2/4. Catalyzes the isomerization between 2-isopropylmalate and 3-isopropylmalate, via the formation of 2-isopropylmaleate. The protein is 3-isopropylmalate dehydratase (LEU1) of Eremothecium gossypii (strain ATCC 10895 / CBS 109.51 / FGSC 9923 / NRRL Y-1056) (Yeast).